The following is a 145-amino-acid chain: 3-hydroxyacyl-[acyl-carrier-protein] dehydratase FabZ (145 aa).

His49 is an active-site residue.

This sequence belongs to the thioester dehydratase family. FabZ subfamily.

Its subcellular location is the cytoplasm. The enzyme catalyses a (3R)-hydroxyacyl-[ACP] = a (2E)-enoyl-[ACP] + H2O. In terms of biological role, involved in unsaturated fatty acids biosynthesis. Catalyzes the dehydration of short chain beta-hydroxyacyl-ACPs and long chain saturated and unsaturated beta-hydroxyacyl-ACPs. The protein is 3-hydroxyacyl-[acyl-carrier-protein] dehydratase FabZ of Rickettsia peacockii (strain Rustic).